We begin with the raw amino-acid sequence, 86 residues long: MAVRIRLKRFGAKKRPFYRIVVADSRSPRDGRFIDEIGYYNPIAQPAEIKIDVEKAKKWLSVGAQPSDTVKSLFKKEGIIGNSVSQ.

The protein belongs to the bacterial ribosomal protein bS16 family.

The sequence is that of Small ribosomal subunit protein bS16 from Thermoanaerobacter sp. (strain X514).